Consider the following 581-residue polypeptide: Threonine--tRNA ligase (581 aa).

The catalytic stretch occupies residues 185 to 478 (DHRKLGKELD…LIEHYGGAFP (294 aa)). The Zn(2+) site is built by cysteine 278, histidine 329, and histidine 455.

Belongs to the class-II aminoacyl-tRNA synthetase family. Homodimer. Zn(2+) is required as a cofactor.

It localises to the cytoplasm. It catalyses the reaction tRNA(Thr) + L-threonine + ATP = L-threonyl-tRNA(Thr) + AMP + diphosphate + H(+). In terms of biological role, catalyzes the attachment of threonine to tRNA(Thr) in a two-step reaction: L-threonine is first activated by ATP to form Thr-AMP and then transferred to the acceptor end of tRNA(Thr). Also edits incorrectly charged L-seryl-tRNA(Thr). This is Threonine--tRNA ligase from Borreliella afzelii (strain PKo) (Borrelia afzelii).